The following is a 308-amino-acid chain: Cilia- and flagella-associated protein 73 (308 aa).

Coiled-coil stretches lie at residues 103–134 and 164–227; these read RIQK…LEKN and LSAT…QEAK.

The protein belongs to the CFAP73 family. Interacts with FAP100; form the modifier of inner arm (MIA) complex.

It localises to the cytoplasm. The protein resides in the cytoskeleton. The protein localises to the flagellum axoneme. Its function is as follows. As part of MIA, a complex associated with the outer doublet microtubules of the axoneme, may play a role in ciliary/flagellar motility by regulating the assembly and the activity of inner dynein arm. This chain is Cilia- and flagella-associated protein 73, found in Chlamydomonas reinhardtii (Chlamydomonas smithii).